Here is a 73-residue protein sequence, read N- to C-terminus: DNA-directed RNA polymerase subunit epsilon (73 aa).

This sequence belongs to the RNA polymerase subunit epsilon family. In terms of assembly, RNAP is composed of a core of 2 alpha, a beta and a beta' subunit. The core is associated with a delta subunit, and at least one of epsilon or omega. When a sigma factor is associated with the core the holoenzyme is formed, which can initiate transcription.

The catalysed reaction is RNA(n) + a ribonucleoside 5'-triphosphate = RNA(n+1) + diphosphate. A non-essential component of RNA polymerase (RNAP). The protein is DNA-directed RNA polymerase subunit epsilon of Lactobacillus helveticus (strain DPC 4571).